Reading from the N-terminus, the 499-residue chain is Centrosomal protein of 57 kDa (499 aa).

The span at 1-16 (MAAASVSAASDSQFSS) shows a compositional bias: low complexity. The disordered stretch occupies residues 1-41 (MAAASVSAASDSQFSSVLAEPSRSNGNMVHHSSSPYVLYPP). Over residues 22–35 (SRSNGNMVHHSSSP) the composition is skewed to polar residues. A Phosphoserine modification is found at Ser-53. Positions 58–239 (TFAYPESNSR…RAAELQSGIE (182 aa)) are centrosome localization domain (CLD). Residues 63 to 242 (ESNSRAIFSA…ELQSGIEANR (180 aa)) adopt a coiled-coil conformation. Disordered stretches follow at residues 255–275 (TSTRKIKKKKSKPPEKKGFRN) and 424–476 (LEKQ…SRKN). A mediates interaction with microtubules region spans residues 278 to 490 (GAQPHYRLCL…KDMQTLQNSL (213 aa)). Residues 388–491 (PSEELKDNLE…DMQTLQNSLQ (104 aa)) adopt a coiled-coil conformation. Residues 427–443 (QSTDKQKELKGNKKTLD) are compositionally biased toward basic and acidic residues. Positions 448-458 (SSSRSSVITRT) are enriched in low complexity. A compositionally biased stretch (basic and acidic residues) spans 460–474 (SKKDFTKQRPGEKSR).

Belongs to the translokin family. In terms of assembly, homodimer and homooligomer. Interacts with FGF2 and RAP80. Does not interact with FGF1 or FGF2 isoform 24 kDa. Interacts with microtubules. As to expression, ubiquitous (at protein level).

The protein localises to the nucleus. Its subcellular location is the cytoplasm. It is found in the cytoskeleton. The protein resides in the microtubule organizing center. It localises to the centrosome. Its function is as follows. Centrosomal protein which may be required for microtubule attachment to centrosomes. May act by forming ring-like structures around microtubules. Mediates nuclear translocation and mitogenic activity of the internalized growth factor FGF2. The polypeptide is Centrosomal protein of 57 kDa (Cep57) (Rattus norvegicus (Rat)).